The chain runs to 428 residues: Gamma-glutamyl phosphate reductase (428 aa).

It belongs to the gamma-glutamyl phosphate reductase family.

It is found in the cytoplasm. It carries out the reaction L-glutamate 5-semialdehyde + phosphate + NADP(+) = L-glutamyl 5-phosphate + NADPH + H(+). The protein operates within amino-acid biosynthesis; L-proline biosynthesis; L-glutamate 5-semialdehyde from L-glutamate: step 2/2. In terms of biological role, catalyzes the NADPH-dependent reduction of L-glutamate 5-phosphate into L-glutamate 5-semialdehyde and phosphate. The product spontaneously undergoes cyclization to form 1-pyrroline-5-carboxylate. The chain is Gamma-glutamyl phosphate reductase from Mesorhizobium japonicum (strain LMG 29417 / CECT 9101 / MAFF 303099) (Mesorhizobium loti (strain MAFF 303099)).